Reading from the N-terminus, the 87-residue chain is Glutaredoxin (87 aa).

The region spanning methionine 1–lysine 87 is the Glutaredoxin domain. Cysteines 14 and 17 form a disulfide.

It belongs to the glutaredoxin family.

Functionally, serves as a reducing agent for the phage-induced ribonucleotide reductase, but not for the bacterial ones. This specificity may be the result of sequence differences around the redox-active disulfide bond. The oxidized form accepts electrons from bacterial glutathione and will, in turn, reduce other small disulfides. Can also be reduced by NADPH and by bacterial thioredoxin reductase. This Enterobacteria phage T4 (Bacteriophage T4) protein is Glutaredoxin (NRDC).